A 163-amino-acid chain; its full sequence is Phosphopantetheine adenylyltransferase (163 aa).

Residue serine 8 participates in substrate binding. Residues 8-9 and histidine 16 each bind ATP; that span reads SF. Substrate-binding residues include lysine 40, threonine 72, and arginine 86. ATP contacts are provided by residues 87–89, glutamate 97, and 122–128; these read GLR and HSFLSSS.

The protein belongs to the bacterial CoaD family. As to quaternary structure, homohexamer. The cofactor is Mg(2+).

It is found in the cytoplasm. It carries out the reaction (R)-4'-phosphopantetheine + ATP + H(+) = 3'-dephospho-CoA + diphosphate. It participates in cofactor biosynthesis; coenzyme A biosynthesis; CoA from (R)-pantothenate: step 4/5. Its function is as follows. Reversibly transfers an adenylyl group from ATP to 4'-phosphopantetheine, yielding dephospho-CoA (dPCoA) and pyrophosphate. The chain is Phosphopantetheine adenylyltransferase from Synechococcus sp. (strain CC9902).